Reading from the N-terminus, the 945-residue chain is Soluble guanylate cyclase gcy-33 (945 aa).

H104 lines the heme pocket. Positions 388 to 413 form a coiled coil; it reads SEVLTEMTREISEAKKTARTLLTQMM. One can recognise a Guanylate cyclase domain in the interval 437 to 567; that stretch reads SIGFIRVCDF…DTVNTASRME (131 aa). Disordered regions lie at residues 639 to 679 and 706 to 930; these read KEAE…LSGS and QDEN…KCED. Residues 661–679 show a composition bias toward low complexity; it reads SLGESIDSSSSRRGSLSGS. Residues 711-720 show a composition bias toward polar residues; sequence RPPTWSASHS. Residues 721 to 731 are compositionally biased toward basic and acidic residues; that stretch reads QDIRKPRKTES. A compositionally biased stretch (polar residues) spans 732–744; the sequence is KITLNSRLSSSDL. Basic and acidic residues-rich tracts occupy residues 750–759 and 766–804; these read ETSKDSDGET and ELKE…DHVS. The stretch at 763-802 forms a coiled coil; that stretch reads TSSELKEVNRIREEALAQEKEEERTTKEENQKIEEVGEDH. The span at 817-828 shows a compositional bias: polar residues; sequence GDNNISFSQMPS. Residues 851 to 861 are compositionally biased toward basic and acidic residues; sequence ISKKKLEKEDS. Positions 862-884 are enriched in polar residues; it reads NSSMSSLDERTTVSAKPTTTRRL. Residues 886–896 are compositionally biased toward basic and acidic residues; the sequence is NQKDLEKEKKR. The span at 898 to 911 shows a compositional bias: low complexity; sequence SMAGSSVTSSSAHS. The span at 916–930 shows a compositional bias: basic and acidic residues; that stretch reads SKKDTRDKSRCKCED.

The protein belongs to the adenylyl cyclase class-4/guanylyl cyclase family. In terms of assembly, heterodimer; with other soluble guanylate cyclases. The cofactor is heme. Expressed in BAG sensory neuron.

It localises to the cytoplasm. It catalyses the reaction GTP = 3',5'-cyclic GMP + diphosphate. May be regulated by molecular oxygen. Probably not activated by nitric oxide (NO). In terms of biological role, synthesizes cyclic GMP (cGMP) from GTP. May be involved in sensitivity to quinine by regulating egl-4 activity through the production of cGMP. This Caenorhabditis elegans protein is Soluble guanylate cyclase gcy-33 (gcy-33).